Reading from the N-terminus, the 237-residue chain is MRPSGRELNEMRPVSIETGFTKHAEGSALIKIGDTHVLCTATIEDRVPPFIKGSGLGWVTAEYGMLPRATNTRMRRESTAGKQGGRTVEIQRLIGRSLRAGVDRVALGERQITVDCDVLQADGGTRCASITGGWVALRLAVNKLMKAGDVISDPLVDPVAAISCGIYAGQPVMDLDYPEDSEAGVDGNFIMTGSKQLIEVQMSAEGATFSRDQMNQLMDLAEKGVGELVAAQKAATA.

Residues Arg86 and 124–126 (GTR) each bind phosphate.

The protein belongs to the RNase PH family. As to quaternary structure, homohexameric ring arranged as a trimer of dimers.

The enzyme catalyses tRNA(n+1) + phosphate = tRNA(n) + a ribonucleoside 5'-diphosphate. Its function is as follows. Phosphorolytic 3'-5' exoribonuclease that plays an important role in tRNA 3'-end maturation. Removes nucleotide residues following the 3'-CCA terminus of tRNAs; can also add nucleotides to the ends of RNA molecules by using nucleoside diphosphates as substrates, but this may not be physiologically important. Probably plays a role in initiation of 16S rRNA degradation (leading to ribosome degradation) during starvation. This is Ribonuclease PH from Roseobacter denitrificans (strain ATCC 33942 / OCh 114) (Erythrobacter sp. (strain OCh 114)).